The primary structure comprises 4466 residues: Dynein beta chain, ciliary (4466 aa).

A stem region spans residues 1–1813 (MGDVVDARLD…YANICDAQFK (1813 aa)). Residue 154-161 (AGQVKGKT) participates in ATP binding. Coiled-coil stretches lie at residues 482–502 (QEFLEDYEEFEKKVFDLDRRL), 627–643 (QKYEEMLNLLNKYEQKV), 734–805 (VLEV…WTKQ), 1036–1056 (TLDQFKEQVDTYEKIYSEADE), 1306–1337 (WLEINVEQMEMDCKKFAKDIRSLDKEMRAWDA), and 1443–1468 (LLKSNEELIETLEDNQVQLQNLMTSK). 4 AAA regions span residues 1814–2035 (YSYE…VLVV), 2095–2316 (KVVK…IRFK), 2422–2669 (ELDP…VFQG), and 2767–3016 (TYNE…ERRY). ATP is bound by residues 1852–1859 (GPAGTGKT), 2133–2140 (GNAGTGKS), 2460–2467 (GNAGLGKS), and 2805–2812 (GVGGSGKQ). Coiled coils occupy residues 3033–3134 (SLLA…AKAE), 3263–3325 (EPKR…SRTI), and 3573–3642 (QERP…EEAK). The interval 3033-3325 (SLLAMKSKEL…QEAEATSRTI (293 aa)) is stalk. AAA stretches follow at residues 3409 to 3636 (LTDD…EISV) and 3846 to 4072 (VRNF…VLYN).

The protein belongs to the dynein heavy chain family. In terms of assembly, consists of at least two heavy chains (alpha and beta), three intermediate chains and several light chains.

The protein localises to the cell projection. The protein resides in the cilium. It localises to the flagellum. Its subcellular location is the cytoplasm. It is found in the cytoskeleton. The protein localises to the flagellum axoneme. Force generating protein of eukaryotic cilia and flagella. Produces force towards the minus ends of microtubules. Dynein has ATPase activity; the force-producing power stroke is thought to occur on release of ADP. This is Dynein beta chain, ciliary from Heliocidaris crassispina (Sea urchin).